The chain runs to 456 residues: MRKSPGLSDYLWAWILLLSTLTGRSYGQPSLQDELKDNTTVFTRILDRLLDGYDNRLRPGLGERVTEVKTDIFVTSFGPVSDHDMEYTIDVFFRQSWKDERLKFKGPMTVLRLNNLMASKIWTPDTFFHNGKKSVAHNMTMPNKLLRITEDGTLLYTMRLTVRAECPMHLEDFPMDAHACPLKFGSYAYTRAEVVYEWTREPARSVVVAEDGSRLNQYDLLGQTVDSGIVQSSTGEYVVMTTHFHLKRKIGYFVIQTYLPCIMTVILSQVSFWLNRESVPARTVFGVTTVLTMTTLSISARNSLPKVAYATAMDWFIAVCYAFVFSALIEFATVNYFTKRGYAWDGKSVVPEKPKKVKDPLIKKNNTYAPTATSYTPNLARGDPGLATIAKSATIEPKEVKPETKPPEPKKTFNSVSKIDRLSRIAFPLLFGIFNLVYWATYLNREPQLKAPTPHQ.

A signal peptide spans 1 to 27 (MRKSPGLSDYLWAWILLLSTLTGRSYG). Residues 28-253 (QPSLQDELKD…FHLKRKIGYF (226 aa)) are Extracellular-facing. Asn38 carries N-linked (GlcNAc...) asparagine glycosylation. Arg94 provides a ligand contact to 4-aminobutanoate. A glycan (N-linked (GlcNAc...) asparagine) is linked at Asn138. 4-aminobutanoate is bound at residue Thr157. Cysteines 166 and 180 form a disulfide. The helical transmembrane segment at 254 to 274 (VIQTYLPCIMTVILSQVSFWL) threads the bilayer. Over 275–279 (NRESV) the chain is Cytoplasmic. The chain crosses the membrane as a helical span at residues 280–301 (PARTVFGVTTVLTMTTLSISAR). At 302–311 (NSLPKVAYAT) the chain is on the extracellular side. A helical membrane pass occupies residues 312 to 333 (AMDWFIAVCYAFVFSALIEFAT). Topologically, residues 334–421 (VNYFTKRGYA…TFNSVSKIDR (88 aa)) are cytoplasmic. Residues 422-441 (LSRIAFPLLFGIFNLVYWAT) form a helical membrane-spanning segment. Residues 442 to 456 (YLNREPQLKAPTPHQ) are Extracellular-facing.

Belongs to the ligand-gated ion channel (TC 1.A.9) family. Gamma-aminobutyric acid receptor (TC 1.A.9.5) subfamily. GABRA1 sub-subfamily. As to quaternary structure, heteropentamer, formed by a combination of alpha (GABRA1-6), beta (GABRB1-3), gamma (GABRG1-3), delta (GABRD), epsilon (GABRE), rho (GABRR1-3), pi (GABRP) and theta (GABRQ) subunits, each subunit exhibiting distinct physiological and pharmacological properties. Interacts with UBQLN1. Interacts with TRAK1. Interacts with KIF21B. Identified in a complex of 720 kDa composed of LHFPL4, NLGN2, GABRA1, GABRB2, GABRG2 and GABRB3. Interacts with LHFPL4. Interacts with NLGN2. Interacts with SHISA7; interaction leads to the regulation of GABA(A) receptor trafficking, channel deactivation kinetics and pharmacology.

Its subcellular location is the postsynaptic cell membrane. It localises to the cell membrane. It is found in the cytoplasmic vesicle membrane. The enzyme catalyses chloride(in) = chloride(out). With respect to regulation, allosterically activated by benzodiazepines, the neuroanesthetic alphaxalone and pentobarbital. Inhibited by the antagonist bicuculline. Potentiated by histamine. Functionally, alpha subunit of the heteropentameric ligand-gated chloride channel gated by gamma-aminobutyric acid (GABA), a major inhibitory neurotransmitter in the brain. GABA-gated chloride channels, also named GABA(A) receptors (GABAAR), consist of five subunits arranged around a central pore and contain GABA active binding site(s) located at the alpha and beta subunit interface(s). When activated by GABA, GABAARs selectively allow the flow of chloride anions across the cell membrane down their electrochemical gradient. Alpha-1/GABRA1-containing GABAARs are largely synaptic. Chloride influx into the postsynaptic neuron following GABAAR opening decreases the neuron ability to generate a new action potential, thereby reducing nerve transmission. GABAARs containing alpha-1 and beta-2 or -3 subunits exhibit synaptogenic activity; the gamma-2 subunit being necessary but not sufficient to induce rapid synaptic contacts formation. GABAARs function also as histamine receptor where histamine binds at the interface of two neighboring beta subunits and potentiates GABA response. GABAARs containing alpha, beta and epsilon subunits also permit spontaneous chloride channel activity while preserving the structural information required for GABA-gated openings. Alpha-1-mediated plasticity in the orbitofrontal cortex regulates context-dependent action selection. Together with rho subunits, may also control neuronal and glial GABAergic transmission in the cerebellum. This chain is Gamma-aminobutyric acid receptor subunit alpha-1 (GABRA1), found in Macaca fascicularis (Crab-eating macaque).